Reading from the N-terminus, the 114-residue chain is MGVMEILVSTLEAVPGYRVAQVLGVVKGSTVRSKHLGKDLLAGLRTLVGGELPEYTEMLQEAREVAEARMLEEARRLGAHAVLGVRYATASVMQGAAEILVYGTAVRLEPAREV.

This sequence belongs to the UPF0145 family.

This chain is UPF0145 protein TTHA1944, found in Thermus thermophilus (strain ATCC 27634 / DSM 579 / HB8).